The sequence spans 198 residues: Outer-membrane lipoprotein carrier protein (198 aa).

The first 17 residues, 1-17 (MKKFLFSLCLLSSTVLA), serve as a signal peptide directing secretion.

This sequence belongs to the LolA family. As to quaternary structure, monomer.

It localises to the periplasm. Functionally, participates in the translocation of lipoproteins from the inner membrane to the outer membrane. Only forms a complex with a lipoprotein if the residue after the N-terminal Cys is not an aspartate (The Asp acts as a targeting signal to indicate that the lipoprotein should stay in the inner membrane). The protein is Outer-membrane lipoprotein carrier protein of Aliivibrio fischeri (strain MJ11) (Vibrio fischeri).